Reading from the N-terminus, the 341-residue chain is Elongation factor Ts (341 aa).

The tract at residues 80-83 (TDFV) is involved in Mg(2+) ion dislocation from EF-Tu.

It belongs to the EF-Ts family.

Its subcellular location is the cytoplasm. Its function is as follows. Associates with the EF-Tu.GDP complex and induces the exchange of GDP to GTP. It remains bound to the aminoacyl-tRNA.EF-Tu.GTP complex up to the GTP hydrolysis stage on the ribosome. The protein is Elongation factor Ts of Lactobacillus gasseri (strain ATCC 33323 / DSM 20243 / BCRC 14619 / CIP 102991 / JCM 1131 / KCTC 3163 / NCIMB 11718 / NCTC 13722 / AM63).